A 341-amino-acid chain; its full sequence is Glycerol-3-phosphate dehydrogenase [NAD(P)+] (341 aa).

Positions 17, 18, 37, and 112 each coordinate NADPH. 2 residues coordinate sn-glycerol 3-phosphate: K112 and G140. A144 is a binding site for NADPH. Residues K195, D248, S258, R259, and N260 each contribute to the sn-glycerol 3-phosphate site. Residue K195 is the Proton acceptor of the active site. Residue R259 participates in NADPH binding. 2 residues coordinate NADPH: V283 and E285.

Belongs to the NAD-dependent glycerol-3-phosphate dehydrogenase family.

It localises to the cytoplasm. The enzyme catalyses sn-glycerol 3-phosphate + NAD(+) = dihydroxyacetone phosphate + NADH + H(+). It carries out the reaction sn-glycerol 3-phosphate + NADP(+) = dihydroxyacetone phosphate + NADPH + H(+). It participates in membrane lipid metabolism; glycerophospholipid metabolism. Functionally, catalyzes the reduction of the glycolytic intermediate dihydroxyacetone phosphate (DHAP) to sn-glycerol 3-phosphate (G3P), the key precursor for phospholipid synthesis. This chain is Glycerol-3-phosphate dehydrogenase [NAD(P)+], found in Mycobacterium avium (strain 104).